The following is a 564-amino-acid chain: Plant UBX domain-containing protein 8 (564 aa).

Ala-2 is subject to N-acetylalanine. One can recognise a UBA-like domain in the interval 2–44 (ATPNQEAIDTFISITGASDAVALQKLEEHRGDLNQAVNAYFSE). UIM domains are found at residues 198–217 (IEEE…AEGS) and 230–249 (EDDD…AEEE). Residues 210–229 (SKKEAEGSSNPLLEERPLHM) are disordered. Disordered stretches follow at residues 267 to 358 (AVTA…EEHD), 371 to 423 (IPET…DKEM), and 443 to 483 (FLEE…QADE). The segment covering 291-300 (FDDDSDDVDE) has biased composition (acidic residues). Phosphoserine is present on residues Ser-295, Ser-324, Ser-326, and Ser-328. The span at 322 to 334 (DRSRSGSPEEEHA) shows a compositional bias: basic and acidic residues. The segment covering 381 to 395 (FLPPQPRAQPRPPSP) has biased composition (pro residues). The stretch at 412–478 (VASLQADRDK…DAKEASLPKE (67 aa)) forms a coiled coil. Residues 443-475 (FLEEEKKKEEEAQRKLEEEQELERQLDAKEASL) are compositionally biased toward basic and acidic residues. Residues 482-560 (DEENAITLLI…GLTSKQEALF (79 aa)) enclose the UBX domain.

In terms of assembly, interacts with RABA5C/ARA-4.

This Arabidopsis thaliana (Mouse-ear cress) protein is Plant UBX domain-containing protein 8.